A 293-amino-acid chain; its full sequence is Glycine--tRNA ligase alpha subunit (293 aa).

Belongs to the class-II aminoacyl-tRNA synthetase family. As to quaternary structure, tetramer of two alpha and two beta subunits.

The protein localises to the cytoplasm. It carries out the reaction tRNA(Gly) + glycine + ATP = glycyl-tRNA(Gly) + AMP + diphosphate. This chain is Glycine--tRNA ligase alpha subunit, found in Picosynechococcus sp. (strain ATCC 27264 / PCC 7002 / PR-6) (Agmenellum quadruplicatum).